The sequence spans 507 residues: Solute carrier family 2, facilitated glucose transporter member 6 (507 aa).

Residues 1–28 (MQEPLLGAEGPDYDTFPEKPPPSPGDRA) are disordered. Topologically, residues 1–37 (MQEPLLGAEGPDYDTFPEKPPPSPGDRARVGTLQNKR) are cytoplasmic. The short motif at 5-6 (LL) is the Dileucine internalization motif element. At Ser23 the chain carries Phosphoserine. The helical transmembrane segment at 38-58 (VFLATFAAVLGNFSFGYALVY) threads the bilayer. The Extracellular segment spans residues 59-81 (TSPVIPALERSLDPDLHLTKSQA). Residues 82–102 (SWFGSVFTLGAAAGGLSAMIL) traverse the membrane as a helical segment. At 103-111 (NDLLGRKLS) the chain is on the cytoplasmic side. The helical transmembrane segment at 112 to 132 (IMFSAVPSAAGYALMAGAHGL) threads the bilayer. At 133–140 (WMLLLGRT) the chain is on the extracellular side. A helical membrane pass occupies residues 141 to 161 (LTGFAGGLTAACIPVYVSEIA). At 162–168 (PPGVRGA) the chain is on the cytoplasmic side. Residues 169-189 (LGATPQLMAVFGSLSLYALGL) form a helical membrane-spanning segment. A D-hexose is bound at residue Gln174. The Extracellular segment spans residues 190-194 (LLPWR). The chain crosses the membrane as a helical span at residues 195–215 (WLAVAGEAPVLIMILLLSFMP). Residues 216–289 (NSPRFLLSRG…LLMRLLQQLT (74 aa)) are Cytoplasmic-facing. 286-287 (QQ) contributes to the a D-hexose binding site. A helical membrane pass occupies residues 290–310 (GITPILVYLQSIFDSTAVLLP). Residues 311 to 314 (PKDD) are Extracellular-facing. The chain crosses the membrane as a helical span at residues 315 to 335 (AAIVGAVRLLSVLIAALTMDL). Topologically, residues 336–339 (AGRK) are cytoplasmic. The helical transmembrane segment at 340–360 (VLLFVSAAIMFAANLTLGLYI) threads the bilayer. Residues 361–395 (HFGPRPLSPNSTAGLESESWGDLAQPLAAPAGYLT) lie on the Extracellular side of the membrane. Asn370 is a glycosylation site (N-linked (GlcNAc...) asparagine). A helical membrane pass occupies residues 396–416 (LVPLLATMLFIMGYAVGWGPI). The Cytoplasmic segment spans residues 417–435 (TWLLMSEVLPLRARGVASG). Trp418 is a binding site for a D-hexose. The helical transmembrane segment at 436–456 (LCVLASWLTAFVLTKSFLPVV) threads the bilayer. Residues 457 to 462 (STFGLQ) are Extracellular-facing. Residues 463 to 483 (VPFFFFAAICLVSLVFTGCCV) form a helical membrane-spanning segment. Residues 484–507 (PETKGRSLEQIESFFRTGRRSFLR) lie on the Cytoplasmic side of the membrane.

It belongs to the major facilitator superfamily. Sugar transporter (TC 2.A.1.1) family. Glucose transporter subfamily. In terms of tissue distribution, highly expressed in brain, spleen and peripheral blood leukocytes.

The protein resides in the lysosome membrane. In terms of biological role, probable sugar transporter that acts as a regulator of glycolysis in macrophages. Does not transport glucose. The sequence is that of Solute carrier family 2, facilitated glucose transporter member 6 from Homo sapiens (Human).